The sequence spans 228 residues: UPF0173 metal-dependent hydrolase RBAM_026340 (228 aa).

Belongs to the UPF0173 family.

The chain is UPF0173 metal-dependent hydrolase RBAM_026340 from Bacillus velezensis (strain DSM 23117 / BGSC 10A6 / LMG 26770 / FZB42) (Bacillus amyloliquefaciens subsp. plantarum).